A 504-amino-acid polypeptide reads, in one-letter code: MQMSKSFLLITVGLASTSLQAQTLTRDNGAPVGDNQNSITAGENGSVLLQDVHLIQKLQRFARERIPERVVHARGTGAHGEFVASGDFSDLTVSAPFTEKGKVTPVFVRFSTVIHSKGSPETLRDPRGFATKFYTEQGNWDLVGNNLPVFFIRDSIKFPDMVHSLKPSPVTNVQDPNRFFDFFSHEPSATHMLTWVYSNLGTPASYRTMDGFGVHAYKWINQQGDVNYVKFQWKSQQGIKSLRPNKVTEMQGKDFNHLTNDLYAAIGRGNYPKWDLYVKVLSPEALSKLDYNGLDATKVWLNVPDRKVGTMTLNRLPENFFLETEQSAFAPSNLIPGIEPSEDRLLQGRLFAYADTQLYRLGANLFQLPVNRPLTSVNNHNQNGLSNNAQLSNGDVNYEPSRKLNLAEDNQFKAVETKLVGTVQQKAISKPRDFYQAGVLYRSMNEQDRSDLIANLAGDLNKVIDKDIKATMVSYFYRADKEYGSRLAEATDTNLSQVKNKAMM.

An N-terminal signal peptide occupies residues 1–21 (MQMSKSFLLITVGLASTSLQA). Catalysis depends on residues His72 and Asn145. Residue Tyr353 coordinates heme.

The protein belongs to the catalase family. Heme is required as a cofactor.

The protein resides in the periplasm. It catalyses the reaction 2 H2O2 = O2 + 2 H2O. Functionally, decomposes hydrogen peroxide into water and oxygen; serves to protect cells from the toxic effects of hydrogen peroxide. This Vibrio parahaemolyticus serotype O3:K6 (strain RIMD 2210633) protein is Catalase.